The chain runs to 635 residues: Protein NSP-INTERACTING KINASE 2 (635 aa).

The signal sequence occupies residues 1-32 (MLQGRREAKKSYALFSSTFFFFFICFLSSSSA). At 33 to 248 (ELTDKGVNFE…DGGTKNRKIA (216 aa)) the chain is on the extracellular side. Asn92 and Asn103 each carry an N-linked (GlcNAc...) asparagine glycan. LRR repeat units lie at residues 104–128 (LTNL…IGKL), 129–153 (MKLK…SYSK), 155–176 (LQYL…LANM), and 177–200 (TQLT…LAKT). Residues Asn140, Asn162, Asn175, Asn188, Asn219, Asn231, and Asn235 are each glycosylated (N-linked (GlcNAc...) asparagine). The disordered stretch occupies residues 214–242 (TEKDCNGTQPKPMSITLNSSQNKSSDGGT). Positions 219-241 (NGTQPKPMSITLNSSQNKSSDGG) are enriched in polar residues. A helical transmembrane segment spans residues 249 to 269 (VVFGVSLTCVCLLIIGFGFLL). Topologically, residues 270-635 (WWRRRHNKQV…VQAMELSGPR (366 aa)) are cytoplasmic. Thr309 bears the Phosphothreonine mark. Residues 312–591 (FSSKNLVGKG…EGDGLVEKWE (280 aa)) form the Protein kinase domain. Residues 318–326 (VGKGGFGNV) and Lys340 each bind ATP. Phosphoserine occurs at positions 393 and 396. A Phosphothreonine modification is found at Thr408. An interaction with geminivirus NSP protein region spans residues 422–502 (YLHEQCDPKI…DVFGFGILLL (81 aa)). Asp435 serves as the catalytic Proton acceptor. 3 positions are modified to phosphothreonine: Thr468, Thr469, and Thr474. Tyr482 bears the Phosphotyrosine mark. Ser484 carries the phosphoserine modification. A Phosphothreonine modification is found at Thr485. At Ser489 the chain carries Phosphoserine. Thr564 is modified (phosphothreonine). The segment covering 593–613 (SSQRAETNRSYSKPNEFSSSE) has biased composition (polar residues). The tract at residues 593 to 621 (SSQRAETNRSYSKPNEFSSSERYSDLTDD) is disordered.

Belongs to the protein kinase superfamily. Ser/Thr protein kinase family. In terms of assembly, oligomer. Interacts with geminivirus nuclear shuttle protein (NSP). Post-translationally, autophosphorylated. In terms of tissue distribution, expressed in flowers and roots.

The protein localises to the cell membrane. It catalyses the reaction L-seryl-[protein] + ATP = O-phospho-L-seryl-[protein] + ADP + H(+). The enzyme catalyses L-threonyl-[protein] + ATP = O-phospho-L-threonyl-[protein] + ADP + H(+). Inhibited by the viral nuclear shuttle protein (NSP) that binds to the region required for oligomerization. Involved in defense response to geminivirus infection. Phosphorylates RPL10A in vitro. The sequence is that of Protein NSP-INTERACTING KINASE 2 (NIK2) from Arabidopsis thaliana (Mouse-ear cress).